The primary structure comprises 458 residues: NADH-ubiquinone oxidoreductase chain 4 (458 aa).

13 helical membrane-spanning segments follow: residues 22 to 42, 63 to 83, 96 to 116, 117 to 137, 150 to 170, 194 to 214, 224 to 244, 257 to 277, 284 to 306, 311 to 333, 350 to 370, 391 to 413, and 434 to 454; these read FFWTAFISSSFLMPFLFFIFT, MISAPLVFLSLWMLPLMALAS, LLYITILIIMQTLLILTFLST, NLMNFYILFESSLIPILLIIF, IYLSFYTLIGSLPLLASLLFL, ILWLGCFSALLIKTPLYGFHL, TIAGSMTLAALMLKLGGYGMI, LSLILISIALWGAVMTSFICL, ALIAYSSVSHMGLMTASIMTLSL, GAFIMMIAHGLSSSALFFLANSN, MLLPLTSLWWLFIILTNLAMP, LTFPFLALTMVITTTYSMSMFML, and LTLFLHLFPMIAIMAYPNMII.

Belongs to the complex I subunit 4 family.

The protein resides in the mitochondrion membrane. It catalyses the reaction a ubiquinone + NADH + 5 H(+)(in) = a ubiquinol + NAD(+) + 4 H(+)(out). In terms of biological role, core subunit of the mitochondrial membrane respiratory chain NADH dehydrogenase (Complex I) that is believed to belong to the minimal assembly required for catalysis. Complex I functions in the transfer of electrons from NADH to the respiratory chain. The immediate electron acceptor for the enzyme is believed to be ubiquinone. In Myxine glutinosa (Atlantic hagfish), this protein is NADH-ubiquinone oxidoreductase chain 4 (MT-ND4).